A 445-amino-acid polypeptide reads, in one-letter code: GTPase Obg (445 aa).

Residues 7–164 (PEFVDCVTVE…RKLRLEVKSI (158 aa)) enclose the Obg domain. One can recognise an OBG-type G domain in the interval 165–342 (ADVALVGFPS…FTLRLGEICQ (178 aa)). GTP contacts are provided by residues 171–178 (GFPSVGKS), 196–200 (FTTLH), 217–220 (DVPG), 291–294 (NKID), and 323–325 (SAV). Mg(2+)-binding residues include S178 and T198. In terms of domain architecture, OCT spans 357-434 (IPAKNTPEFS…IGGVIFTWDP (78 aa)).

The protein belongs to the TRAFAC class OBG-HflX-like GTPase superfamily. OBG GTPase family. In terms of assembly, monomer. Mg(2+) is required as a cofactor.

Its subcellular location is the cytoplasm. An essential GTPase which binds GTP, GDP and possibly (p)ppGpp with moderate affinity, with high nucleotide exchange rates and a fairly low GTP hydrolysis rate. Plays a role in control of the cell cycle, stress response, ribosome biogenesis and in those bacteria that undergo differentiation, in morphogenesis control. This is GTPase Obg from Tropheryma whipplei (strain Twist) (Whipple's bacillus).